The sequence spans 262 residues: Ribosomal RNA small subunit methyltransferase G (262 aa).

The S-adenosyl-L-methionine site is built by glycine 72, leucine 77, and arginine 142. Positions arginine 212–threonine 262 are disordered. The segment covering alanine 219–proline 254 has biased composition (basic and acidic residues).

It belongs to the methyltransferase superfamily. RNA methyltransferase RsmG family.

Its subcellular location is the cytoplasm. Functionally, specifically methylates the N7 position of guanine in position 518 of 16S rRNA. The sequence is that of Ribosomal RNA small subunit methyltransferase G from Frankia alni (strain DSM 45986 / CECT 9034 / ACN14a).